The chain runs to 143 residues: Transcriptional regulator MraZ (143 aa).

SpoVT-AbrB domains lie at 5–47 (EYQH…PQDE) and 76–119 (ATEC…SKER).

This sequence belongs to the MraZ family. As to quaternary structure, forms oligomers.

It is found in the cytoplasm. It localises to the nucleoid. The chain is Transcriptional regulator MraZ from Brevibacillus brevis (strain 47 / JCM 6285 / NBRC 100599).